Here is a 418-residue protein sequence, read N- to C-terminus: Ig-like V-type domain-containing protein FAM187A (418 aa).

The N-terminal stretch at 1 to 18 (MRLAPTTVLLWAWGSLQA) is a signal peptide. Residues 19–376 (FEIVEKENIF…ASLSDPETRT (358 aa)) are Extracellular-facing. The 95-residue stretch at 267-361 (PWVPQVPIQF…IAGFRLGVTS (95 aa)) folds into the Ig-like V-type domain. A disulfide bridge connects residues Cys289 and Cys345. An N-linked (GlcNAc...) asparagine glycan is attached at Asn317. The chain crosses the membrane as a helical span at residues 377 to 397 (AVELTLIGYLLIAVVFVTIHL). The Cytoplasmic portion of the chain corresponds to 398–418 (CRCCCQSRCCPNFSAQTLLQL).

The protein belongs to the FAM187 family.

The protein localises to the membrane. The sequence is that of Ig-like V-type domain-containing protein FAM187A (Fam187a) from Rattus norvegicus (Rat).